The chain runs to 305 residues: ATP synthase gamma chain (305 aa).

It belongs to the ATPase gamma chain family. In terms of assembly, F-type ATPases have 2 components, CF(1) - the catalytic core - and CF(0) - the membrane proton channel. CF(1) has five subunits: alpha(3), beta(3), gamma(1), delta(1), epsilon(1). CF(0) has three main subunits: a, b and c.

The protein resides in the cell membrane. Produces ATP from ADP in the presence of a proton gradient across the membrane. The gamma chain is believed to be important in regulating ATPase activity and the flow of protons through the CF(0) complex. This chain is ATP synthase gamma chain, found in Streptomyces coelicolor (strain ATCC BAA-471 / A3(2) / M145).